Here is a 397-residue protein sequence, read N- to C-terminus: Natural killer cell receptor 2B4 (397 aa).

Residues 1–19 (MLGQAVLFTTFLLLRAHQG) form the signal peptide. The Extracellular portion of the chain corresponds to 20–226 (QDCPDSSEEV…SVPSNFRFLP (207 aa)). Cys22 and Cys119 are disulfide-bonded. 2 consecutive Ig-like domains span residues 22 to 129 (CPDS…LILD) and 131 to 215 (VETP…THGC). N-linked (GlcNAc...) asparagine glycosylation is found at Asn78, Asn145, Asn161, Asn178, Asn197, Asn206, and Asn210. The cysteines at positions 154 and 196 are disulfide-linked. The chain crosses the membrane as a helical span at residues 227–247 (FGVIIVILVTLFLGAIICFCV). Over 248–397 (WTKKRKQLQF…RELENFDVYS (150 aa)) the chain is Cytoplasmic. The ITSM 1 motif lies at 264-269 (TIYEYV). Tyr266 bears the Phosphotyrosine mark. Positions 277 to 290 (DQQGCSRASGSPSA) are enriched in polar residues. Residues 277-300 (DQQGCSRASGSPSAVQEDGRGQRE) form a disordered region. 3 short sequence motifs (ITSM) span residues 323–328 (TMYSMI), 342–347 (TVYSVV), and 367–372 (TVYEEV). Tyr325 is modified (phosphotyrosine; by FYN). Tyr344 is modified (phosphotyrosine). Tyr369 is modified (phosphotyrosine; by FYN).

Interacts with CD48. Interacts (via phosphorylated ITSM 1-4) with SH2D1A/SAP (via SH2 domain); SH2D1A probably mediates association with FYN. Interacts (via phosphorylated ITSM 3) with PTPN11/SHP-2, INPP5D/SHIP1, PTPN6/SHP-1 and CSK; binding of SH2D1A prevents association with PTPN11, PTPN6 and CSK. Interacts weakly (via phosphorylated ITSM 2) with PTPN11 and CSK. Interacts with SH2D1B and SH2D1B2. Interacts with MHC class I proteins; the interaction is proposed to prevent self-killing of NK cells. In terms of processing, N-linked glycosylation is essential for the binding to its ligand CD48. Also O-glycosylated, in contrast, O-linked sialylation has a negative impact on ligand binding. Post-translationally, phosphorylated by FYN and CSK on tyrosine residues following activation. Coligation with inhibitory receptors such as KIR2DL1 inhibits phosphorylation upon contact of NK cells with sensitive target cells. As to expression, expressed in natural killer (NK) cells, T cells and dendritic cells.

Its subcellular location is the membrane. The protein localises to the cell membrane. It localises to the membrane raft. Its function is as follows. Heterophilic receptor of the signaling lymphocytic activation molecule (SLAM) family; its ligand is CD48. SLAM receptors triggered by homo- or heterotypic cell-cell interactions are modulating the activation and differentiation of a wide variety of immune cells and thus are involved in the regulation and interconnection of both innate and adaptive immune response. Activities are controlled by presence or absence of small cytoplasmic adapter proteins, SH2D1A/SAP and/or SH2D1B/EAT-2. Acts as activating natural killer (NK) cell receptor. Activating function implicates association with SH2D1A and FYN. Downstreaming signaling involves predominantly VAV1, and, to a lesser degree, INPP5D/SHIP1 and CBL. Signal attenuation in the absence of SH2D1A is proposed to be dependent on INPP5D and to a lesser extent PTPN6/SHP-1 and PTPN11/SHP-2. Stimulates NK cell cytotoxicity, production of IFN-gamma and granule exocytosis. Optimal expansion and activation of NK cells seems to be dependent on the engagement of CD244 with CD48 expressed on neighboring NK cells. Regulation of NK cell activity by adapters Sh2d1b and Sh2d1b2 is reported conflictingly. Acts as costimulator in NK activation by enhancing signals by other NK receptors such as NCR3 and NCR1. At early stages of NK cell differentiation may function as an inhibitory receptor possibly ensuring the self-tolerance of developing NK cells. Involved in the regulation of CD8(+) T-cell proliferation; expression on activated T-cells and binding to CD48 provides costimulatory-like function for neighboring T-cells. Inhibits inflammatory responses in dendritic cells (DCs). The sequence is that of Natural killer cell receptor 2B4 (Cd244) from Mus musculus (Mouse).